The primary structure comprises 100 residues: NADH-quinone oxidoreductase subunit K 2 (100 aa).

The next 3 helical transmembrane spans lie at 4-24, 28-48, and 60-80; these read LWWF…GVLL, ILVV…NFIA, and IFAI…LGIL.

The protein belongs to the complex I subunit 4L family. As to quaternary structure, NDH-1 is composed of 14 different subunits. Subunits NuoA, H, J, K, L, M, N constitute the membrane sector of the complex.

It is found in the cell inner membrane. The catalysed reaction is a quinone + NADH + 5 H(+)(in) = a quinol + NAD(+) + 4 H(+)(out). Functionally, NDH-1 shuttles electrons from NADH, via FMN and iron-sulfur (Fe-S) centers, to quinones in the respiratory chain. The immediate electron acceptor for the enzyme in this species is believed to be ubiquinone. Couples the redox reaction to proton translocation (for every two electrons transferred, four hydrogen ions are translocated across the cytoplasmic membrane), and thus conserves the redox energy in a proton gradient. The polypeptide is NADH-quinone oxidoreductase subunit K 2 (Rhizobium etli (strain CIAT 652)).